Consider the following 140-residue polypeptide: Translation initiation factor 2 subunit beta (140 aa).

It belongs to the eIF-2-beta/eIF-5 family. Heterotrimer composed of an alpha, a beta and a gamma chain.

Functionally, eIF-2 functions in the early steps of protein synthesis by forming a ternary complex with GTP and initiator tRNA. This is Translation initiation factor 2 subunit beta (eif2b) from Pyrococcus horikoshii (strain ATCC 700860 / DSM 12428 / JCM 9974 / NBRC 100139 / OT-3).